A 197-amino-acid chain; its full sequence is ATP synthase subunit delta', mitochondrial (197 aa).

The transit peptide at 1–19 (MFRRATSTFLSRASATRRF) directs the protein to the mitochondrion.

The protein belongs to the ATPase epsilon chain family. F-type ATPases have 2 components, CF(1) - the catalytic core - and CF(0) - the membrane proton channel. CF(1) has five subunits: alpha(3), beta(3), gamma(1), delta(1), epsilon(1). CF(0) has three main subunits: a, b and c.

Its subcellular location is the mitochondrion. The protein resides in the mitochondrion inner membrane. Mitochondrial membrane ATP synthase (F(1)F(0) ATP synthase or Complex V) produces ATP from ADP in the presence of a proton gradient across the membrane which is generated by electron transport complexes of the respiratory chain. F-type ATPases consist of two structural domains, F(1) - containing the extramembraneous catalytic core, and F(0) - containing the membrane proton channel, linked together by a central stalk and a peripheral stalk. During catalysis, ATP turnover in the catalytic domain of F(1) is coupled via a rotary mechanism of the central stalk subunits to proton translocation. Part of the complex F(1) domain and of the central stalk which is part of the complex rotary element. Rotation of the central stalk against the surrounding alpha(3)beta(3) subunits leads to hydrolysis of ATP in three separate catalytic sites on the beta subunits. In Pisum sativum (Garden pea), this protein is ATP synthase subunit delta', mitochondrial.